A 447-amino-acid polypeptide reads, in one-letter code: Glucose-6-phosphate isomerase (447 aa).

The active-site Proton donor is the glutamate 287. Active-site residues include histidine 308 and lysine 422.

Belongs to the GPI family.

Its subcellular location is the cytoplasm. The catalysed reaction is alpha-D-glucose 6-phosphate = beta-D-fructose 6-phosphate. It participates in carbohydrate biosynthesis; gluconeogenesis. It functions in the pathway carbohydrate degradation; glycolysis; D-glyceraldehyde 3-phosphate and glycerone phosphate from D-glucose: step 2/4. In terms of biological role, catalyzes the reversible isomerization of glucose-6-phosphate to fructose-6-phosphate. The sequence is that of Glucose-6-phosphate isomerase from Heliobacterium modesticaldum (strain ATCC 51547 / Ice1).